Reading from the N-terminus, the 112-residue chain is Nucleoid-associated protein lpp2803 (112 aa).

This sequence belongs to the YbaB/EbfC family. Homodimer.

It is found in the cytoplasm. It localises to the nucleoid. In terms of biological role, binds to DNA and alters its conformation. May be involved in regulation of gene expression, nucleoid organization and DNA protection. This is Nucleoid-associated protein lpp2803 from Legionella pneumophila (strain Paris).